The following is a 469-amino-acid chain: Collagenase 3 (469 aa).

Positions 1–17 (SSLSVLVLSLSFAYCLS) are cleaved as a signal peptide. Positions 18 to 100 (APVPQDEDSE…QPRCGVPDVG (83 aa)) are cleaved as a propeptide — activation peptide. Positions 92–99 (PRCGVPDV) match the Cysteine switch motif. Residue Cys94 coordinates Zn(2+). Asn115 carries N-linked (GlcNAc...) asparagine glycosylation. Position 126 (Asp126) interacts with Ca(2+). Asn150 is a glycosylation site (N-linked (GlcNAc...) asparagine). Position 160 (Asp160) interacts with Ca(2+). Zn(2+) contacts are provided by His170 and Asp172. Residues Asp177, Gly178, and Leu182 each coordinate Ca(2+). His185 provides a ligand contact to Zn(2+). Ca(2+) is bound by residues Gly194 and Asp196. His198 is a binding site for Zn(2+). The Ca(2+) site is built by Asp200, Asp201, and Glu203. Position 220 (His220) interacts with Zn(2+). Glu221 is an active-site residue. His224, His230, and Met238 together coordinate Zn(2+). Positions 266–469 (PGNRDPHPKH…ILKTNFVLMC (204 aa)) are interaction with collagen. Hemopexin repeat units follow at residues 279 to 328 (PEKC…WPEL), 329 to 375 (PNKL…GFPK), 377 to 425 (LKAI…FPGI), and 426 to 469 (GEKV…VLMC). Cysteines 282 and 469 form a disulfide. Ca(2+) contacts are provided by Asp289, Ile291, Asp333, Ala335, Ala383, and Asp430.

The protein belongs to the peptidase M10A family. It depends on Ca(2+) as a cofactor. The cofactor is Zn(2+). The proenzyme is activated by removal of the propeptide; this cleavage can be effected by other matrix metalloproteinases and may involve several cleavage steps. Cleavage can also be autocatalytic, after partial maturation by another protease or after treatment with 4-aminophenylmercuric acetate (APMA) (in vitro).

It localises to the secreted. The protein resides in the extracellular space. The protein localises to the extracellular matrix. Functionally, plays a role in the degradation of extracellular matrix proteins including fibrillar collagen, fibronectin, TNC and ACAN. Cleaves several types of triple helical collagen. May also function by activating or degrading key regulatory proteins. Plays a role in wound healing, tissue remodeling, cartilage degradation, bone development, bone mineralization and ossification. This is Collagenase 3 (mmp13) from Xenopus laevis (African clawed frog).